We begin with the raw amino-acid sequence, 241 residues long: Sugar fermentation stimulation protein homolog (241 aa).

It belongs to the SfsA family.

This chain is Sugar fermentation stimulation protein homolog, found in Nostoc sp. (strain PCC 7120 / SAG 25.82 / UTEX 2576).